The sequence spans 173 residues: MTYFVLFLGLCFVLGGLAVASNPSPYYGVVGLVLASVAGCGWLLSLGASFVSLVLFMVYLGGMLVVFVYSVSLAADPFPEAWGDWRVIGYGMGFIVVLVVGVVISGFVEYWNFGVVTVDSVGMFSVRLDFSGVAMFYSWGVGMFLAAGWGLLLTLFVVLELVRGLSRGAIRAV.

Transmembrane regions (helical) follow at residues 1 to 21, 27 to 47, 48 to 68, 87 to 107, and 139 to 159; these read MTYFVLFLGLCFVLGGLAVAS, YGVVGLVLASVAGCGWLLSLG, ASFVSLVLFMVYLGGMLVVFV, VIGYGMGFIVVLVVGVVISGF, and WGVGMFLAAGWGLLLTLFVVL.

The protein belongs to the complex I subunit 6 family.

It is found in the mitochondrion membrane. It catalyses the reaction a ubiquinone + NADH + 5 H(+)(in) = a ubiquinol + NAD(+) + 4 H(+)(out). Functionally, core subunit of the mitochondrial membrane respiratory chain NADH dehydrogenase (Complex I) that is believed to belong to the minimal assembly required for catalysis. Complex I functions in the transfer of electrons from NADH to the respiratory chain. The immediate electron acceptor for the enzyme is believed to be ubiquinone. In Brachyramphus marmoratus (Marbled murrelet), this protein is NADH-ubiquinone oxidoreductase chain 6 (MT-ND6).